Reading from the N-terminus, the 280-residue chain is 4-deoxy-L-threo-5-hexosulose-uronate ketol-isomerase (280 aa).

Residues His-198, His-200, Glu-205, and His-247 each coordinate Zn(2+).

The protein belongs to the KduI family. Requires Zn(2+) as cofactor.

Its subcellular location is the cytoplasm. The enzyme catalyses 5-dehydro-4-deoxy-D-glucuronate = 3-deoxy-D-glycero-2,5-hexodiulosonate. Its function is as follows. Isomerase involved in ulvan degradation. Ulvan is the main polysaccharide component of the Ulvales (green seaweed) cell wall. It is composed of disaccharide building blocks comprising 3-sulfated rhamnose (Rha3S) linked to D-glucuronic acid (GlcA), L-iduronic acid (IduA), or D-xylose (Xyl). Catalyzes the isomerization of 5-dehydro-4-deoxy-D-glucuronate to 3-deoxy-D-glycero-2,5-hexodiulosonate. This chain is 4-deoxy-L-threo-5-hexosulose-uronate ketol-isomerase, found in Formosa agariphila (strain DSM 15362 / KCTC 12365 / LMG 23005 / KMM 3901 / M-2Alg 35-1).